A 518-amino-acid chain; its full sequence is Putative transposase for insertion sequence IS408 (518 aa).

Residues 11–94 (LKEVLRLKWA…PDYTALHREL (84 aa)) enclose the HTH IS408-type domain. A DNA-binding region (H-T-H motif) is located at residues 23-44 (LTHRQISRAIGISVGAVSKFAA). Positions 140 to 335 (QQHRAGEKLF…LPVRRYEIAT (196 aa)) constitute an Integrase catalytic domain. The tract at residues 496-518 (LPTTPAEWRSPEHENVRGPDYYH) is disordered. A compositionally biased stretch (basic and acidic residues) spans 504–518 (RSPEHENVRGPDYYH).

Belongs to the transposase IS21/IS408/IS1162 family.

In terms of biological role, required for the transposition of the insertion element. The protein is Putative transposase for insertion sequence IS408 of Burkholderia multivorans (strain ATCC 17616 / 249).